Reading from the N-terminus, the 397-residue chain is Argininosuccinate synthase (397 aa).

Residues 9 to 17 and A35 each bind ATP; that span reads AFSGGLDTS. L-citrulline-binding residues include Y88 and S93. Residue G117 coordinates ATP. Residues T119, N123, and D124 each contribute to the L-aspartate site. N123 provides a ligand contact to L-citrulline. R127 provides a ligand contact to L-citrulline.

Belongs to the argininosuccinate synthase family. Type 1 subfamily. As to quaternary structure, homotetramer.

It localises to the cytoplasm. The catalysed reaction is L-citrulline + L-aspartate + ATP = 2-(N(omega)-L-arginino)succinate + AMP + diphosphate + H(+). It functions in the pathway amino-acid biosynthesis; L-arginine biosynthesis; L-arginine from L-ornithine and carbamoyl phosphate: step 2/3. The chain is Argininosuccinate synthase from Xanthomonas campestris pv. campestris (strain ATCC 33913 / DSM 3586 / NCPPB 528 / LMG 568 / P 25).